The following is a 171-amino-acid chain: Secreted thaumatin-like protein calA (171 aa).

The signal sequence occupies residues 1–18; the sequence is MLFNKIISLAATLATASA. N-linked (GlcNAc...) asparagine glycans are attached at residues Asn37 and Asn141. Disulfide bonds link Cys130-Cys157 and Cys135-Cys142.

This sequence belongs to the thaumatin family.

The protein resides in the secreted. Its subcellular location is the extracellular space. It is found in the extracellular matrix. It localises to the cell wall. Functionally, secreted thaumatin-like protein that, with cetA, plays an essential role in early conidial germination with a possible role in cell wall remodeling. In Emericella nidulans (strain FGSC A4 / ATCC 38163 / CBS 112.46 / NRRL 194 / M139) (Aspergillus nidulans), this protein is Secreted thaumatin-like protein calA.